Here is a 362-residue protein sequence, read N- to C-terminus: Serine/threonine-protein kinase SBK2 (362 aa).

Over residues 1-11 (MPGKQSEDRPM) the composition is skewed to basic and acidic residues. Residues 1–20 (MPGKQSEDRPMEVAAVEDGG) are disordered. The region spanning 62-330 (YEEVRPLGQG…IKSYLGQPWK (269 aa)) is the Protein kinase domain. ATP-binding positions include 68–76 (LGQGRFGRV) and lysine 91. The Proton acceptor role is filled by aspartate 183. The tract at residues 317–362 (PVSSIKSYLGQPWKQREEGAEELTKELREDGSRGGQEAAKGEQPAC) is disordered. Residues 330 to 348 (KQREEGAEELTKELREDGS) show a composition bias toward basic and acidic residues.

This sequence belongs to the protein kinase superfamily. Ser/Thr protein kinase family. STKL subfamily.

The catalysed reaction is L-seryl-[protein] + ATP = O-phospho-L-seryl-[protein] + ADP + H(+). The enzyme catalyses L-threonyl-[protein] + ATP = O-phospho-L-threonyl-[protein] + ADP + H(+). This Rattus norvegicus (Rat) protein is Serine/threonine-protein kinase SBK2 (Sbk2).